The chain runs to 227 residues: KH domain-containing protein MJ0443 (227 aa).

KH domains follow at residues 14–77 and 106–163; these read KSIE…RDIV and DYAS…KEAV.

This chain is KH domain-containing protein MJ0443, found in Methanocaldococcus jannaschii (strain ATCC 43067 / DSM 2661 / JAL-1 / JCM 10045 / NBRC 100440) (Methanococcus jannaschii).